A 152-amino-acid chain; its full sequence is MFRGASAINLDTKGRIAIPVRYREPLQLEHQGRIVITVDIQSACLLLYPIHEWELIEAKLLKLSDTDKTQRSLKRLLLGYAHEVELDGNGRILLPPPLRQYANLDKRIMLVGQLNKFELWDEQSWLQQIDECLETIRSEELASNERLADFSL.

2 SpoVT-AbrB domains span residues 5-52 (ASAI…PIHE) and 81-124 (AHEV…DEQS).

The protein belongs to the MraZ family. Forms oligomers.

The protein resides in the cytoplasm. The protein localises to the nucleoid. The chain is Transcriptional regulator MraZ from Shewanella baltica (strain OS155 / ATCC BAA-1091).